The chain runs to 148 residues: uncharacterized protein (148 aa).

Residues 1 to 17 (MEGLQRSTISFRRQGSS) show a composition bias toward polar residues. Residues 1-148 (MEGLQRSTIS…SRRRIVTKKR (148 aa)) form a disordered region. Composition is skewed to basic and acidic residues over residues 36–47 (EQKDESQRDEQP) and 58–67 (KPIDEKDKLR). 2 positions are modified to phosphoserine: Ser-100 and Ser-107. Residues 128-148 (VNPRKRPPKRRSRRRIVTKKR) are compositionally biased toward basic residues.

This is an uncharacterized protein from Arabidopsis thaliana (Mouse-ear cress).